A 248-amino-acid polypeptide reads, in one-letter code: ATP synthase subunit a, chloroplastic (248 aa).

A run of 5 helical transmembrane segments spans residues 37–57, 96–116, 135–155, 200–220, and 221–241; these read AQVL…SIVA, VPFI…GALF, INTT…AGLH, LVVA…MMFL, and GLFT…AYIG.

This sequence belongs to the ATPase A chain family. As to quaternary structure, F-type ATPases have 2 components, CF(1) - the catalytic core - and CF(0) - the membrane proton channel. CF(1) has five subunits: alpha(3), beta(3), gamma(1), delta(1), epsilon(1). CF(0) has four main subunits: a, b, b' and c.

It is found in the plastid. The protein localises to the chloroplast thylakoid membrane. Its function is as follows. Key component of the proton channel; it plays a direct role in the translocation of protons across the membrane. The polypeptide is ATP synthase subunit a, chloroplastic (Angiopteris evecta (Mule's foot fern)).